Consider the following 221-residue polypeptide: Eukaryotic translation initiation factor 3 subunit K (221 aa).

Residues 46–207 enclose the PCI domain; that stretch reads YDLEANLACL…NIKTKHITEK (162 aa).

The protein belongs to the eIF-3 subunit K family. In terms of assembly, component of the eukaryotic translation initiation factor 3 (eIF-3) complex.

It is found in the cytoplasm. Component of the eukaryotic translation initiation factor 3 (eIF-3) complex, which is involved in protein synthesis of a specialized repertoire of mRNAs and, together with other initiation factors, stimulates binding of mRNA and methionyl-tRNAi to the 40S ribosome. The eIF-3 complex specifically targets and initiates translation of a subset of mRNAs involved in cell proliferation. This chain is Eukaryotic translation initiation factor 3 subunit K, found in Culex quinquefasciatus (Southern house mosquito).